A 156-amino-acid polypeptide reads, in one-letter code: Small ribosomal subunit protein uS7 (156 aa).

It belongs to the universal ribosomal protein uS7 family. Part of the 30S ribosomal subunit. Contacts proteins S9 and S11.

Its function is as follows. One of the primary rRNA binding proteins, it binds directly to 16S rRNA where it nucleates assembly of the head domain of the 30S subunit. Is located at the subunit interface close to the decoding center, probably blocks exit of the E-site tRNA. This chain is Small ribosomal subunit protein uS7, found in Baumannia cicadellinicola subsp. Homalodisca coagulata.